The primary structure comprises 471 residues: ATP synthase subunit beta (471 aa).

Residue 153–160 (GGAGVGKT) participates in ATP binding.

Belongs to the ATPase alpha/beta chains family. In terms of assembly, F-type ATPases have 2 components, CF(1) - the catalytic core - and CF(0) - the membrane proton channel. CF(1) has five subunits: alpha(3), beta(3), gamma(1), delta(1), epsilon(1). CF(0) has four main subunits: a(1), b(1), b'(1) and c(9-12).

It localises to the cell membrane. The enzyme catalyses ATP + H2O + 4 H(+)(in) = ADP + phosphate + 5 H(+)(out). Functionally, produces ATP from ADP in the presence of a proton gradient across the membrane. The catalytic sites are hosted primarily by the beta subunits. The chain is ATP synthase subunit beta from Roseiflexus castenholzii (strain DSM 13941 / HLO8).